The chain runs to 203 residues: Glycerol-3-phosphate acyltransferase (203 aa).

4 helical membrane passes run 6–26 (LTLL…AVLV), 82–102 (AISL…PVFF), 118–138 (APIG…LVLI), and 141–161 (YSSL…WWLD).

This sequence belongs to the PlsY family. In terms of assembly, probably interacts with PlsX.

Its subcellular location is the cell inner membrane. The catalysed reaction is an acyl phosphate + sn-glycerol 3-phosphate = a 1-acyl-sn-glycero-3-phosphate + phosphate. It participates in lipid metabolism; phospholipid metabolism. In terms of biological role, catalyzes the transfer of an acyl group from acyl-phosphate (acyl-PO(4)) to glycerol-3-phosphate (G3P) to form lysophosphatidic acid (LPA). This enzyme utilizes acyl-phosphate as fatty acyl donor, but not acyl-CoA or acyl-ACP. In Shewanella oneidensis (strain ATCC 700550 / JCM 31522 / CIP 106686 / LMG 19005 / NCIMB 14063 / MR-1), this protein is Glycerol-3-phosphate acyltransferase.